The chain runs to 73 residues: Tetrahydromethanopterin S-methyltransferase subunit F (73 aa).

The chain crosses the membrane as a helical span at residues 52–72 (IGFAAGFLFSLLMVIVLPLLF).

It belongs to the MtrF family. As to quaternary structure, the complex is composed of 8 subunits; MtrA, MtrB, MtrC, MtrD, MtrE, MtrF, MtrG and MtrH.

The protein localises to the cell membrane. It catalyses the reaction 5-methyl-5,6,7,8-tetrahydromethanopterin + coenzyme M + 2 Na(+)(in) = 5,6,7,8-tetrahydromethanopterin + methyl-coenzyme M + 2 Na(+)(out). It functions in the pathway one-carbon metabolism; methanogenesis from CO(2); methyl-coenzyme M from 5,10-methylene-5,6,7,8-tetrahydromethanopterin: step 2/2. Part of a complex that catalyzes the formation of methyl-coenzyme M and tetrahydromethanopterin from coenzyme M and methyl-tetrahydromethanopterin. This is an energy-conserving, sodium-ion translocating step. This chain is Tetrahydromethanopterin S-methyltransferase subunit F, found in Methanosarcina barkeri (strain Fusaro / DSM 804).